The sequence spans 299 residues: ATP phosphoribosyltransferase (299 aa).

Belongs to the ATP phosphoribosyltransferase family. Long subfamily. It depends on Mg(2+) as a cofactor.

It is found in the cytoplasm. It carries out the reaction 1-(5-phospho-beta-D-ribosyl)-ATP + diphosphate = 5-phospho-alpha-D-ribose 1-diphosphate + ATP. Its pathway is amino-acid biosynthesis; L-histidine biosynthesis; L-histidine from 5-phospho-alpha-D-ribose 1-diphosphate: step 1/9. Feedback inhibited by histidine. In terms of biological role, catalyzes the condensation of ATP and 5-phosphoribose 1-diphosphate to form N'-(5'-phosphoribosyl)-ATP (PR-ATP). Has a crucial role in the pathway because the rate of histidine biosynthesis seems to be controlled primarily by regulation of HisG enzymatic activity. This Mannheimia succiniciproducens (strain KCTC 0769BP / MBEL55E) protein is ATP phosphoribosyltransferase.